The chain runs to 455 residues: UDP-N-acetylmuramoylalanine--D-glutamate ligase (455 aa).

ATP is bound at residue 120–126 (GSNGKTT).

This sequence belongs to the MurCDEF family.

The protein resides in the cytoplasm. It carries out the reaction UDP-N-acetyl-alpha-D-muramoyl-L-alanine + D-glutamate + ATP = UDP-N-acetyl-alpha-D-muramoyl-L-alanyl-D-glutamate + ADP + phosphate + H(+). Its pathway is cell wall biogenesis; peptidoglycan biosynthesis. Its function is as follows. Cell wall formation. Catalyzes the addition of glutamate to the nucleotide precursor UDP-N-acetylmuramoyl-L-alanine (UMA). This chain is UDP-N-acetylmuramoylalanine--D-glutamate ligase, found in Pediococcus pentosaceus (strain ATCC 25745 / CCUG 21536 / LMG 10740 / 183-1w).